A 241-amino-acid chain; its full sequence is 1-(5-phosphoribosyl)-5-[(5-phosphoribosylamino)methylideneamino] imidazole-4-carboxamide isomerase (241 aa).

D10 (proton acceptor) is an active-site residue. The active-site Proton donor is the D131.

It belongs to the HisA/HisF family.

It is found in the cytoplasm. The enzyme catalyses 1-(5-phospho-beta-D-ribosyl)-5-[(5-phospho-beta-D-ribosylamino)methylideneamino]imidazole-4-carboxamide = 5-[(5-phospho-1-deoxy-D-ribulos-1-ylimino)methylamino]-1-(5-phospho-beta-D-ribosyl)imidazole-4-carboxamide. The protein operates within amino-acid biosynthesis; L-histidine biosynthesis; L-histidine from 5-phospho-alpha-D-ribose 1-diphosphate: step 4/9. The sequence is that of 1-(5-phosphoribosyl)-5-[(5-phosphoribosylamino)methylideneamino] imidazole-4-carboxamide isomerase from Bifidobacterium longum (strain NCC 2705).